A 624-amino-acid chain; its full sequence is Actin-related protein 8 (624 aa).

Met-1 carries the N-acetylmethionine modification. The segment covering 1 to 25 (MTQAEKGDAENGKEKGGEKEKEQRG) has biased composition (basic and acidic residues). The disordered stretch occupies residues 1–29 (MTQAEKGDAENGKEKGGEKEKEQRGVKRP). Positions 55 and 56 each coordinate ATP. Position 132 is a phosphoserine (Ser-132). Residue 283 to 286 (DVGD) coordinates ATP. Residue Ser-412 is modified to Phosphoserine. Residues 430–462 (SKQEQSAKATADRKSASKPIGFEGDLRGQSSDL) form a disordered region.

This sequence belongs to the actin family. ARP8 subfamily. Component of the chromatin remodeling INO80 complex; specifically part of a complex module associated with the DBINO domain of INO80. Exists as monomers and dimers, but the dimer is most probably the biologically relevant form required for stable interactions with histones that exploits the twofold symmetry of the nucleosome core.

Its subcellular location is the nucleus. The protein resides in the chromosome. Functionally, plays an important role in the functional organization of mitotic chromosomes. Exhibits low basal ATPase activity, and unable to polymerize. Its function is as follows. Proposed core component of the chromatin remodeling INO80 complex which is involved in transcriptional regulation, DNA replication and probably DNA repair. Required for the recruitment of INO80 (and probably the INO80 complex) to sites of DNA damage Strongly prefer nucleosomes and H3-H4 tetramers over H2A-H2B dimers, suggesting it may act as a nucleosome recognition module within the complex. The protein is Actin-related protein 8 (Actr8) of Mus musculus (Mouse).